A 155-amino-acid chain; its full sequence is MSTPTSFTFNIAYSVPINKDPSQPTLTLEEFWRGLHRGSEKPQLFAEYVADTEVLPNSKSANEFQRKLIMANGAVHTAKGVELLQDVRNADGLLDDGPDALYLTAVYELHVPDVEPGSERAKEIEREYAQLALGAARTVVETIRRWKVEGGLEDA.

It functions in the pathway mycotoxin biosynthesis. Functionally, nonribosomal peptide synthetase; part of the gene cluster that mediates the biosynthesis of acetylaranotin, a member of the epipolythiodioxopiperazine (ETP) class of toxins characterized by a disulfide-bridged cyclic dipeptide. The first step of acetylaranotin biosynthesis is performed by the NRPS ataP which produces diketopiperazine cyclo-L-Phe-L-Phe via the condensation of 2 phenylalanines (L-Phe). The ataC domain of ataTC then catalyzes the formation of bishydroxylation of cyclo-L-Phe-L-Phe. The glutathione S-transferase domain ataG in ataIMG further catalyzes the conjugation of two glutathiones to the bishydroxylated intermediate. Next, the dipeptidase ataJ removes the Glu residues. The following step is performed by the carbon sulfur lyase domain ataI of ataIMG which may convert the bis-cysteinyl adduct to yield an epidithiol intermediate. The ataT domain from ataTC then catalyzes the oxidation of the free dithiols, followed by a cyclization step catalyzed by the cytochrome P450 ataF. AtaF probably acts as an epoxidase to promote a dual epoxidation formation at C8 and C9 along with C8' and C9', followed by the spontaneous nucleophilic attack of the amide nitrogens N10 and N10' to yield an intermediate with the pyrrolidine partial structure. The final steps of acetylaranotin biosynthesis involve the acetylation and ring rearrangement of an epitetrathiodiketopiperazine intermediate to produce acetylaranotin. AtaH probably catalyzes the acetylation of epitetrathiodiketopiperazine to produce a diacetate and ataY is responsible for the formation of the dihydrooxepin moiety that converts the diacetate intermediate to acetylaranotin via acetylapoaranotin. Both enzymes could function independently in the absence of the other. The specific function of ataL within the pathway has still to be determined. The acetylaranotin bis-thiomethyltransferase ataS located outside of acetylaranotin gene cluster is the main thiomethyltransferase responsible for converting acetylaranotin and its related intermediates to their methylated forms. The polypeptide is Acetylaranotin biosynthesis cluster protein L (Aspergillus terreus (strain NIH 2624 / FGSC A1156)).